We begin with the raw amino-acid sequence, 127 residues long: Fluoride-specific ion channel FluC (127 aa).

The next 4 membrane-spanning stretches (helical) occupy residues 4–24 (LSVLGFIALGGAFGACSRYLI), 38–58 (YGTLTVNVVGSFIMGLLIAAF), 71–91 (IIGLGFLGALTTFSTFSMDNV), and 104–124 (LNVLLNVVLSISAAWIGFQLL). Positions 78 and 81 each coordinate Na(+).

It belongs to the fluoride channel Fluc/FEX (TC 1.A.43) family.

It localises to the cell inner membrane. It carries out the reaction fluoride(in) = fluoride(out). Its activity is regulated as follows. Na(+) is not transported, but it plays an essential structural role and its presence is essential for fluoride channel function. Its function is as follows. Fluoride-specific ion channel. Important for reducing fluoride concentration in the cell, thus reducing its toxicity. This is Fluoride-specific ion channel FluC from Vibrio campbellii (strain ATCC BAA-1116).